We begin with the raw amino-acid sequence, 267 residues long: Tryptophan synthase alpha chain (267 aa).

Active-site proton acceptor residues include Glu47 and Asp58.

The protein belongs to the TrpA family. As to quaternary structure, tetramer of two alpha and two beta chains.

It carries out the reaction (1S,2R)-1-C-(indol-3-yl)glycerol 3-phosphate + L-serine = D-glyceraldehyde 3-phosphate + L-tryptophan + H2O. It participates in amino-acid biosynthesis; L-tryptophan biosynthesis; L-tryptophan from chorismate: step 5/5. The alpha subunit is responsible for the aldol cleavage of indoleglycerol phosphate to indole and glyceraldehyde 3-phosphate. This is Tryptophan synthase alpha chain from Chlorobium phaeobacteroides (strain DSM 266 / SMG 266 / 2430).